A 157-amino-acid polypeptide reads, in one-letter code: Small ribosomal subunit protein uS7 (157 aa).

The protein belongs to the universal ribosomal protein uS7 family. As to quaternary structure, part of the 30S ribosomal subunit. Contacts proteins S9 and S11.

In terms of biological role, one of the primary rRNA binding proteins, it binds directly to 16S rRNA where it nucleates assembly of the head domain of the 30S subunit. Is located at the subunit interface close to the decoding center, probably blocks exit of the E-site tRNA. This Akkermansia muciniphila (strain ATCC BAA-835 / DSM 22959 / JCM 33894 / BCRC 81048 / CCUG 64013 / CIP 107961 / Muc) protein is Small ribosomal subunit protein uS7.